A 279-amino-acid chain; its full sequence is Coiled-coil domain-containing protein 117 (279 aa).

The interval 1–82 (MAALGRPFSG…REEEEDDDCP (82 aa)) is disordered. Arg-48 carries the post-translational modification Omega-N-methylarginine. Residue Ser-53 is modified to Phosphoserine. Residues 63–72 (VSVHCKKKHK) are compositionally biased toward basic residues. A coiled-coil region spans residues 141–168 (QCEVARRKLQEIEDRIIDEDEEVEADRN). The tract at residues 217–279 (LLSDKPKPSS…ATSTEEEMEL (63 aa)) is disordered. 2 stretches are compositionally biased toward polar residues: residues 224–235 (PSSNTKNYTGES) and 262–272 (SLYNSLETATS).

Interacts with CIAO2B; the interaction is direct. Interacts with MMS19; the interaction is indirect.

The protein localises to the cytoplasm. It is found in the cytoskeleton. The protein resides in the spindle. Its subcellular location is the nucleus. In terms of biological role, facilitates DNA repair, cell cycle progression, and cell proliferation through its interaction with CIAO2B. The chain is Coiled-coil domain-containing protein 117 from Homo sapiens (Human).